Here is an 805-residue protein sequence, read N- to C-terminus: Hypoxia-inducible factor 1-alpha (805 aa).

Residues 1-26 (MEGSVVVSEKKRISSERRKEKSRDAA) form a disordered region. The segment covering 8–26 (SEKKRISSERRKEKSRDAA) has biased composition (basic and acidic residues). The 54-residue stretch at 17-70 (RRKEKSRDAARCRRSNESEVFYELSHELPLPHNVSSHLDKASIMRLDHQLPAVE) folds into the bHLH domain. PAS domains follow at residues 85 to 157 (DKQL…PAKK) and 229 to 300 (PHPS…TKGQ). In terms of domain architecture, PAC spans 303–346 (TGQYRMLAKKGGYVWVETQATVIYNSKNSQPQCIVCVNYVLSEV). Residues Pro-404 and Pro-560 each carry the 4-hydroxyproline modification. Residues 628–669 (KESTSAPVSPYNGNRSRTSSPVRPAKAVVDKTEKSRPGTPNL) form a disordered region. The segment covering 629 to 648 (ESTSAPVSPYNGNRSRTSSP) has biased composition (polar residues). (3S)-3-hydroxyasparagine is present on Asn-782.

In terms of assembly, efficient DNA binding requires heterodimerization of an alpha and a beta/ARNT subunit. Post-translationally, in normoxia, is hydroxylated on Pro-404 and Pro-560. The hydroxylated prolines promote interaction with VHL, initiating rapid ubiquitination and subsequent proteasomal degradation. Under hypoxia, proline hydroxylation is impaired and ubiquitination is attenuated, resulting in stabilization. In normoxia, is hydroxylated on Asn-782, thus abrogating interaction with CREBBP and EP300 and preventing transcriptional activation. In terms of processing, the iron and 2-oxoglutarate dependent 3-hydroxylation of asparagine is (S) stereospecific within HIF CTAD domains.

The protein localises to the cytoplasm. It localises to the nucleus. It is found in the nucleus speckle. Induced by reactive oxygen species (ROS). Functionally, functions as a master transcriptional regulator of the adaptive response to hypoxia. Under hypoxic conditions, activates the transcription of over 40 genes, including erythropoietin, glucose transporters, glycolytic enzymes, vascular endothelial growth factor, HILPDA, and other genes whose protein products increase oxygen delivery or facilitate metabolic adaptation to hypoxia. Plays an essential role in embryonic vascularization, tumor angiogenesis and pathophysiology of ischemic disease. The protein is Hypoxia-inducible factor 1-alpha (hif1a) of Xenopus laevis (African clawed frog).